Consider the following 91-residue polypeptide: DNA/RNA-binding protein Alba (91 aa).

Position 11 is an N6-acetyllysine (lysine 11).

Belongs to the histone-like Alba family. Acetylated. Acetylation at Lys-11 decreases DNA-binding affinity.

It localises to the cytoplasm. Its subcellular location is the chromosome. Its function is as follows. Binds double-stranded DNA tightly but without sequence specificity. Incubation with DNA in vitro gives fibrous structures 10.3 +/- 1.1 nm in thickness (naked DNA is 1.83 +/- 0.37 nm). This protein does not significantly compact DNA. This is DNA/RNA-binding protein Alba from Thermococcus kodakarensis (strain ATCC BAA-918 / JCM 12380 / KOD1) (Pyrococcus kodakaraensis (strain KOD1)).